The primary structure comprises 368 residues: UDP-galactose/UDP-N-acetylglucosamine transporter srf-3 (368 aa).

Helical transmembrane passes span 72 to 92 (FVSTVAVWLTEVIKCFICLFL), 118 to 138 (LKVCIPAMIYIVQNNLFYVAA), 145 to 165 (TFMITSQLKIFTAAIFTVIIL), 174 to 194 (WFALAVLFVGVSLVQLQGTKA), 203 to 223 (FVGFVAVVVACCLSGFAGIYF), 235 to 254 (LWMRNVQMAVFSIPASFSAI), 273 to 293 (SIVWLTVLWYGVGGLSVAVCI), and 317 to 337 (IFLFDFIPSFTFLLGASLVIF).

This sequence belongs to the nucleotide-sugar transporter family. SLC35A subfamily. As to expression, expressed exclusively in pharyngeal cells g1 and g2, lateral seam cells, spermatheca and vas deferens.

It is found in the golgi apparatus membrane. In terms of biological role, acts as a transporter of both UDP-galactose and UDP-N-acetylglucosamine into the Golgi lumen. Apparently transports UDP-galactose and UDP-N-acetylglucosamine simultaneously, and independently, by an unknown mechanism. Functions redundantly with nucleotide sugar transporter nstp-4. May be involved in gonadal development. In Caenorhabditis elegans, this protein is UDP-galactose/UDP-N-acetylglucosamine transporter srf-3 (srf-3).